The primary structure comprises 424 residues: Histidine--tRNA ligase (424 aa).

The protein belongs to the class-II aminoacyl-tRNA synthetase family. As to quaternary structure, homodimer.

The protein localises to the cytoplasm. It catalyses the reaction tRNA(His) + L-histidine + ATP = L-histidyl-tRNA(His) + AMP + diphosphate + H(+). This is Histidine--tRNA ligase from Bacillus licheniformis (strain ATCC 14580 / DSM 13 / JCM 2505 / CCUG 7422 / NBRC 12200 / NCIMB 9375 / NCTC 10341 / NRRL NRS-1264 / Gibson 46).